The sequence spans 247 residues: Synaptonemal complex central element protein 1-like (247 aa).

Residues 71–196 (SEELGEAQAL…LQEARETWDS (126 aa)) adopt a coiled-coil conformation. A disordered region spans residues 189-247 (EARETWDSPGNCGLKTELEELEGQSQRSPEAQNDKGEASQEEQHHLETSEELPRTGTLC). A compositionally biased stretch (basic and acidic residues) spans 220–241 (QNDKGEASQEEQHHLETSEELP).

This sequence belongs to the SYCE family. In terms of tissue distribution, isoform 1 is abundantly expressed in testis and weakly in ovary, it is not found in other tissues. Isoform 2 is expressed in testis and poorly in brain, heart, lung and other examined tissues.

Its function is as follows. May be involved in meiosis. Isoform 1 may be involved in meiosis during spermatogenesis while isoform 2 is probably related to a later stage of meiosis, in the development stage of secondary spermatocytes and spermatids. This chain is Synaptonemal complex central element protein 1-like (Syce1l), found in Mus musculus (Mouse).